We begin with the raw amino-acid sequence, 348 residues long: Anthranilate phosphoribosyltransferase (348 aa).

5-phospho-alpha-D-ribose 1-diphosphate is bound by residues G89, 92–93 (GD), T97, 99–102 (NIST), 117–125 (KHGNRSVSS), and S129. G89 is an anthranilate binding site. S101 lines the Mg(2+) pocket. N120 is an anthranilate binding site. Residue R175 coordinates anthranilate. Residues D233 and E234 each contribute to the Mg(2+) site.

The protein belongs to the anthranilate phosphoribosyltransferase family. Homodimer. It depends on Mg(2+) as a cofactor.

It carries out the reaction N-(5-phospho-beta-D-ribosyl)anthranilate + diphosphate = 5-phospho-alpha-D-ribose 1-diphosphate + anthranilate. It functions in the pathway amino-acid biosynthesis; L-tryptophan biosynthesis; L-tryptophan from chorismate: step 2/5. Its function is as follows. Catalyzes the transfer of the phosphoribosyl group of 5-phosphorylribose-1-pyrophosphate (PRPP) to anthranilate to yield N-(5'-phosphoribosyl)-anthranilate (PRA). This chain is Anthranilate phosphoribosyltransferase, found in Shewanella sp. (strain W3-18-1).